The following is a 527-amino-acid chain: Peptide chain release factor 3 (527 aa).

The tr-type G domain occupies 11 to 278 (AKRRTFAIIS…GFVEWAPPPL (268 aa)). GTP-binding positions include 20 to 27 (SHPDAGKT), 87 to 91 (DTPGH), and 141 to 144 (NKMD).

It belongs to the TRAFAC class translation factor GTPase superfamily. Classic translation factor GTPase family. PrfC subfamily.

The protein localises to the cytoplasm. Functionally, increases the formation of ribosomal termination complexes and stimulates activities of RF-1 and RF-2. It binds guanine nucleotides and has strong preference for UGA stop codons. It may interact directly with the ribosome. The stimulation of RF-1 and RF-2 is significantly reduced by GTP and GDP, but not by GMP. The polypeptide is Peptide chain release factor 3 (Saccharophagus degradans (strain 2-40 / ATCC 43961 / DSM 17024)).